We begin with the raw amino-acid sequence, 131 residues long: Large ribosomal subunit protein bL17 (131 aa).

It belongs to the bacterial ribosomal protein bL17 family. Part of the 50S ribosomal subunit. Contacts protein L32.

The polypeptide is Large ribosomal subunit protein bL17 (Azoarcus sp. (strain BH72)).